We begin with the raw amino-acid sequence, 322 residues long: Short-chain dehydrogenase TIC 32, chloroplastic (322 aa).

NADP(+) contacts are provided by residues 36 to 42 (GASSGIG), 88 to 89 (DL), N115, and T136. S170 provides a ligand contact to substrate. Y192 (proton acceptor) is an active-site residue. Residues 298-314 (DTELAKKVWDFSTKLTD) are interaction with calmodulin.

It belongs to the short-chain dehydrogenases/reductases (SDR) family. Part of the Tic complex. Interacts with TIC110. As to expression, expressed in leaves and roots.

It is found in the plastid. The protein localises to the chloroplast inner membrane. Functionally, involved in protein precursor import into chloroplasts. Part of the redox regulon consisting of TIC32, TIC 55 and TIC62. The protein is Short-chain dehydrogenase TIC 32, chloroplastic of Arabidopsis thaliana (Mouse-ear cress).